Here is a 347-residue protein sequence, read N- to C-terminus: Methionine import ATP-binding protein MetN (347 aa).

Positions 2 to 247 (ITTTGLTKVY…PGSELASALF (246 aa)) constitute an ABC transporter domain. Position 38–45 (38–45 (GQSGAGKS)) interacts with ATP.

This sequence belongs to the ABC transporter superfamily. Methionine importer (TC 3.A.1.24) family. As to quaternary structure, the complex is composed of two ATP-binding proteins (MetN), two transmembrane proteins (MetI) and a solute-binding protein (MetQ).

It is found in the cell membrane. The catalysed reaction is L-methionine(out) + ATP + H2O = L-methionine(in) + ADP + phosphate + H(+). It carries out the reaction D-methionine(out) + ATP + H2O = D-methionine(in) + ADP + phosphate + H(+). Functionally, part of the ABC transporter complex MetNIQ involved in methionine import. Responsible for energy coupling to the transport system. The polypeptide is Methionine import ATP-binding protein MetN (Streptomyces avermitilis (strain ATCC 31267 / DSM 46492 / JCM 5070 / NBRC 14893 / NCIMB 12804 / NRRL 8165 / MA-4680)).